The primary structure comprises 187 residues: MVKCTPLLALTVIVSAGSDALSDPTVKRLAKLATINQAPATQSNSDSKRVLRASDVPNEVAAGESRSPKSLWPWEVEDKLAPLKEKLISTSADDLEAGGSAKKNALPMTWRWLWQNQIETKKTPIDEISKEVQTAMDLISSKATHEELNKAGVSVSDYVKALKLTLPEVDVDVVNRGMEYNIHLGNK.

An N-terminal signal peptide occupies residues 1–20 (MVKCTPLLALTVIVSAGSDA). Residues 49-66 (RVLRASDVPNEVAAGESR) carry the RxLR-dEER motif.

This sequence belongs to the RxLR effector family.

It localises to the secreted. The protein localises to the host cell. Its function is as follows. Secreted effector that acts as an elicitor of hypersensitive response (HR) specifically on plants carrying defense protein RPP39. The allele ATR39-1 is recognized by RPP39, whereas the ATR39-2 allele is nor recognized. This Hyaloperonospora arabidopsidis (strain Emoy2) (Downy mildew agent) protein is Avirulence protein ATR39-2.